An 826-amino-acid polypeptide reads, in one-letter code: MGKKRTKGKSVPEKASSESTEPMCRHLRKGLEQGNLKKALVNVEWNICQDCKTDNKVKDKSEEEAEDPSVWLCLKCGHQGCGRDSQEQHALKHYTTPRSEPHYLVLSLDNWSVWCYKCDEEIKYCSSNRLGQVVDYVRKQAGRITSKPAEKNNGHIELENKKLEKESKNEQEREKSESMAKENIPLDSASQITVKGLSNLGNTCFFNAVMQNLSQTPVLRELLKEVKMSGTIVKIEPPDLALTEPLEVNLEPPGPLTLAMSQFLNEMQENKKRIVTPKELFSQVCKKATRFKGYQQQDSQELLRYLLDGMRAEEHQRVSKGILKAFGNSTEKLDEEVKNKVKDYEKKKAIPSFVDRIFGGELTSTIMCDDCRTVSLVHESFLDLSLPVLDDQSGKKNINDKNVKKTMEEEDKDSEEEKDDSYMKTRSDVPSGTSKHTQKKAKKQAKKQAKNQRRQQKIQERFLHFNEICTTNYTEDNDHEAETALPGEGEVDTEFNRGSQEELTQTELCANQKDVNGQEEMIESAADERKCPEHPEVKSVSTESDLGSLTSAPECPRDLNGAFLEERTSGELDITNGLKNLTLNAAVDPDEISIEILNDSHSPALKVYEVMNEDPETAFCTLANREAFSTDECSIQHCLYQFTRNEKLQDANKLLCEVCTRRQCNGPKANIKGERKHVYTNAKKQMLVSLAPPVLTLHLKRFQQAGFNLRKVNKHIKFPEILDLAPFCTLKCKNVAEESTRVLYSLYGVVEHSGTMRSGHYTAYAKERTASCHLSNLVLHGDIPQDCEMESTKGQWFHISDTHVQAVPITKVLNSQAYLLFYERIL.

Residues 1–23 (MGKKRTKGKSVPEKASSESTEPM) form a disordered region. The segment at 22-141 (PMCRHLRKGL…QVVDYVRKQA (120 aa)) adopts a UBP-type zinc-finger fold. Positions 24, 26, 48, 51, 73, 76, 81, 89, 93, 102, 115, and 118 each coordinate Zn(2+). A Glycyl lysine isopeptide (Lys-Gly) (interchain with G-Cter in SUMO2) cross-link involves residue Lys139. A disordered region spans residues 145–184 (TSKPAEKNNGHIELENKKLEKESKNEQEREKSESMAKENI). The span at 148 to 180 (PAEKNNGHIELENKKLEKESKNEQEREKSESMA) shows a compositional bias: basic and acidic residues. Ser188 carries the post-translational modification Phosphoserine. One can recognise a USP domain in the interval 195–825 (KGLSNLGNTC…QAYLLFYERI (631 aa)). Residue Cys204 is the Nucleophile of the active site. Positions 392 to 407 (QSGKKNINDKNVKKTM) are enriched in basic and acidic residues. 2 disordered regions span residues 392 to 456 (QSGK…RRQQ) and 526 to 553 (ADER…TSAP). Residues 408 to 419 (EEEDKDSEEEKD) are compositionally biased toward acidic residues. Ser414 bears the Phosphoserine mark. Positions 436 to 456 (HTQKKAKKQAKKQAKNQRRQQ) are enriched in basic residues. Over residues 526–537 (ADERKCPEHPEV) the composition is skewed to basic and acidic residues. The span at 539–551 (SVSTESDLGSLTS) shows a compositional bias: polar residues. The Proton acceptor role is filled by His760.

The protein belongs to the peptidase C19 family. USP16 subfamily. In terms of assembly, homotetramer. Associates with late pre-40S ribosomes. Interacts with CEP78; promoting deubiquitination of tektins. Phosphorylated at the onset of mitosis and dephosphorylated during the metaphase/anaphase transition. Phosphorylation by AURKB enhances the deubiquitinase activity.

It is found in the nucleus. It carries out the reaction Thiol-dependent hydrolysis of ester, thioester, amide, peptide and isopeptide bonds formed by the C-terminal Gly of ubiquitin (a 76-residue protein attached to proteins as an intracellular targeting signal).. In terms of biological role, specifically deubiquitinates 'Lys-120' of histone H2A (H2AK119Ub), a specific tag for epigenetic transcriptional repression, thereby acting as a coactivator. Deubiquitination of histone H2A is a prerequisite for subsequent phosphorylation at 'Ser-11' of histone H3 (H3S10ph), and is required for chromosome segregation when cells enter into mitosis. In resting B- and T-lymphocytes, phosphorylation by AURKB leads to enhance its activity, thereby maintaining transcription in resting lymphocytes. Regulates Hox gene expression via histone H2A deubiquitination. Prefers nucleosomal substrates. Does not deubiquitinate histone H2B. Also deubiquitinates non-histone proteins, such as ribosomal protein RPS27A: deubiquitination of monoubiquitinated RPS27A promotes maturation of the 40S ribosomal subunit. Also mediates deubiquitination of tektin proteins (TEKT1, TEKT2, TEK3, TEKT4 and TEKT5), promoting their stability. The protein is Ubiquitin carboxyl-terminal hydrolase 16 (Usp16) of Rattus norvegicus (Rat).